The chain runs to 751 residues: Dual specificity tyrosine-phosphorylation-regulated kinase 1A (751 aa).

The span at 59-68 (YNDQIQQPLP) shows a compositional bias: polar residues. 2 disordered regions span residues 59 to 81 (YNDQIQQPLPNQRRMPQTFRDPA) and 104 to 129 (YAKKKRRHQQGQGDDSSHKKERKVYN). The short motif at 109–126 (RRHQQGQGDDSSHKKERK) is the Bipartite nuclear localization signal element. The Protein kinase domain occupies 151–471 (YEIDSLIGKG…PYYALQHSFF (321 aa)). ATP-binding positions include 157 to 165 (IGKGSFGQV), Lys-180, and 230 to 233 (FEML). Asp-279 serves as the catalytic Proton acceptor. The segment covering 477–493 (EGTNTSNSVSTSPAMEQ) has biased composition (polar residues). Disordered regions lie at residues 477-532 (EGTN…HSGG), 580-667 (HVPS…GNQA), and 730-751 (GMDREDSPMTGVCVQQSPVASS). The span at 494–517 (SQSSGTTSSTSSSSGGSSGTSNSG) shows a compositional bias: low complexity. The histidine-rich domain (HRD) stretch occupies residues 585–613 (QQNVPHHHGNGSHHHHHHHHHHHGQHVLS). Positions 589-609 (PHHHGNGSHHHHHHHHHHHGQ) are enriched in basic residues. A compositionally biased stretch (polar residues) spans 611 to 622 (VLSNRTRTRIYN). Composition is skewed to low complexity over residues 623-633 (SPSTSSSTQDS) and 642-660 (SMTSLSSSTTSSSTSSSST). The span at 742–751 (CVQQSPVASS) shows a compositional bias: polar residues.

It belongs to the protein kinase superfamily. CMGC Ser/Thr protein kinase family. MNB/DYRK subfamily. Post-translationally, autophosphorylated on tyrosine residues.

The protein resides in the nucleus. Its subcellular location is the nucleus speckle. It catalyses the reaction L-seryl-[protein] + ATP = O-phospho-L-seryl-[protein] + ADP + H(+). It carries out the reaction L-threonyl-[protein] + ATP = O-phospho-L-threonyl-[protein] + ADP + H(+). The enzyme catalyses L-tyrosyl-[protein] + ATP = O-phospho-L-tyrosyl-[protein] + ADP + H(+). The catalysed reaction is [DNA-directed RNA polymerase] + ATP = phospho-[DNA-directed RNA polymerase] + ADP + H(+). In terms of biological role, dual-specificity kinase which possesses both serine/threonine and tyrosine kinase activities. Exhibits a substrate preference for proline at position P+1 and arginine at position P-3. Plays an important role in double-strand breaks (DSBs) repair following DNA damage. Mechanistically, phosphorylates RNF169 and increases its ability to block accumulation of TP53BP1 at the DSB sites thereby promoting homologous recombination repair (HRR). Also acts as a positive regulator of transcription by acting as a CTD kinase that mediates phosphorylation of the CTD (C-terminal domain) of the large subunit of RNA polymerase II (RNAP II) POLR2A. Modulates alternative splicing by phosphorylating the splice factor SRSF6. Phosphorylates SEPTIN4, SEPTIN5 and SF3B1. The polypeptide is Dual specificity tyrosine-phosphorylation-regulated kinase 1A (Xenopus tropicalis (Western clawed frog)).